Consider the following 290-residue polypeptide: MAFVTMKHLLAEAKREHYAVGQFNINGLQWTKAILQAAQKEQSPVIAAASDRLVDYLGGFKTISAMVGALMEEMAITVPVVLHLDHGSSAERCRQAIDAGFSSVMIDGSHHPIDENIAMTKEVADYAAKHGVSVEAEVGTVGGMEDGLVGGVRYADVAECERIVKETNIDALAAALGSVHGKYQGEPNLGFKEMEAISRMTDIPLVLHGASGIPQEQIKKAITLGHAKININTECMVAWTDETRRMFQKNGDLYEPRGYMTPGIEAVEETVRSKMREFGSAGKAVKQQVG.

Catalysis depends on aspartate 85, which acts as the Proton donor. The Zn(2+) site is built by histidine 86 and histidine 180. Glycine 181 serves as a coordination point for dihydroxyacetone phosphate. Histidine 208 serves as a coordination point for Zn(2+). Dihydroxyacetone phosphate-binding positions include 209 to 211 (GAS) and 230 to 233 (NINT). Position 233 is a phosphothreonine (threonine 233).

The protein belongs to the class II fructose-bisphosphate aldolase family. IolJ subfamily. The cofactor is Zn(2+).

It catalyses the reaction 6-phospho-5-dehydro-2-deoxy-D-gluconate = 3-oxopropanoate + dihydroxyacetone phosphate. It functions in the pathway polyol metabolism; myo-inositol degradation into acetyl-CoA; acetyl-CoA from myo-inositol: step 6/7. Functionally, produces dihydroxyacetone phosphate (DHAP or glycerone phosphate) and malonic semialdehyde (MSA or 3-oxopropanoate) from 6-phospho-5-dehydro-2-deoxy-D-gluconate (DKGP). The sequence is that of 6-phospho-5-dehydro-2-deoxy-D-gluconate aldolase (iolJ) from Bacillus velezensis (strain DSM 23117 / BGSC 10A6 / LMG 26770 / FZB42) (Bacillus amyloliquefaciens subsp. plantarum).